The sequence spans 476 residues: 3-isopropylmalate dehydratase large subunit (476 aa).

[4Fe-4S] cluster is bound by residues Cys-353, Cys-413, and Cys-416.

This sequence belongs to the aconitase/IPM isomerase family. LeuC type 1 subfamily. As to quaternary structure, heterodimer of LeuC and LeuD. The cofactor is [4Fe-4S] cluster.

The catalysed reaction is (2R,3S)-3-isopropylmalate = (2S)-2-isopropylmalate. Its pathway is amino-acid biosynthesis; L-leucine biosynthesis; L-leucine from 3-methyl-2-oxobutanoate: step 2/4. Its function is as follows. Catalyzes the isomerization between 2-isopropylmalate and 3-isopropylmalate, via the formation of 2-isopropylmaleate. This is 3-isopropylmalate dehydratase large subunit from Yersinia enterocolitica serotype O:8 / biotype 1B (strain NCTC 13174 / 8081).